A 131-amino-acid polypeptide reads, in one-letter code: MSWQSYVDDHLMCDVEGNHLTAAAILGQDGSVWAQSAKFPQLKPQEIDGIKKDFEEPGFLAPTGLFLGGEKYMVIQGEQGAVIRGKKGPGGVTIKKTNQALVFGFYDEPMTGGQCNLVVERLGDYLIESEL.

It belongs to the profilin family. In terms of assembly, occurs in many kinds of cells as a complex with monomeric actin in a 1:1 ratio. As to expression, expressed at low levels roots, leaves, stems, flowers and siliques. Expressed in leaf epidermal cells, trichomes and stem epidermal cells. Detected in phloem exudates (at protein level).

It localises to the cytoplasm. It is found in the cytoskeleton. In terms of biological role, binds to actin monomers and regulates the organization of the actin cytoskeleton. At high concentrations, profilin prevents the polymerization of actin, whereas it enhances it at low concentrations. At low concentrations, associates with the poly-proline motif of formins to enhance actin filament elongation rate. Binds ACT1, ACT7 and ACT11 and inhibits actin polymerization. Coordinates the stochastic dynamic properties of actin filaments by modulating formin-mediated actin nucleation and assembly during axial cell expansion. Binds G-actin and poly-L-proline in vitro. Inhibits cell growth of various pathogenic fungal strains. May play a role as antifungal proteins in the defense system against fungal pathogen attacks. This Arabidopsis thaliana (Mouse-ear cress) protein is Profilin-1.